The sequence spans 358 residues: 3-dehydroquinate synthase (358 aa).

Residues 70 to 75 (DGEAHK), 104 to 108 (GVIGD), 128 to 129 (TT), Lys141, and Lys150 each bind NAD(+). Glu183, His246, and His263 together coordinate Zn(2+).

It belongs to the sugar phosphate cyclases superfamily. Dehydroquinate synthase family. Requires NAD(+) as cofactor. Co(2+) is required as a cofactor. It depends on Zn(2+) as a cofactor.

The protein resides in the cytoplasm. It carries out the reaction 7-phospho-2-dehydro-3-deoxy-D-arabino-heptonate = 3-dehydroquinate + phosphate. It participates in metabolic intermediate biosynthesis; chorismate biosynthesis; chorismate from D-erythrose 4-phosphate and phosphoenolpyruvate: step 2/7. Functionally, catalyzes the conversion of 3-deoxy-D-arabino-heptulosonate 7-phosphate (DAHP) to dehydroquinate (DHQ). The protein is 3-dehydroquinate synthase of Bordetella bronchiseptica (strain ATCC BAA-588 / NCTC 13252 / RB50) (Alcaligenes bronchisepticus).